A 278-amino-acid chain; its full sequence is Putative transcription factor kapC (278 aa).

Pro residues predominate over residues 1-10 (MQPALAPAPH). Residues 1–121 (MQPALAPAPH…QNRAAQRAFR (121 aa)) are disordered. A compositionally biased stretch (polar residues) spans 56 to 68 (PTATTSPRDQNNI). The bZIP domain occupies 103-166 (PLSTSKRAAQ…EYVINLQSRL (64 aa)). A basic motif region spans residues 104–127 (LSTSKRAAQNRAAQRAFRQRKESY). Residues 109–119 (RAAQNRAAQRA) show a composition bias toward low complexity. A leucine-zipper region spans residues 131–162 (LEEQVKEYEVMSQEYKALQAENYQLREYVINL). A disordered region spans residues 173-278 (VPELPGNIDL…PPTHGLPMVS (106 aa)). Residues 198–214 (PGQAGASAPPQGSPQSQ) are compositionally biased toward low complexity. A compositionally biased stretch (polar residues) spans 215 to 226 (VSIANDDMNSLN). A compositionally biased stretch (basic and acidic residues) spans 254–269 (GRGDETADPSETKTEP).

This sequence belongs to the bZIP family.

It localises to the nucleus. Its function is as follows. Putative transcription factor. In Emericella nidulans (strain FGSC A4 / ATCC 38163 / CBS 112.46 / NRRL 194 / M139) (Aspergillus nidulans), this protein is Putative transcription factor kapC (kapC).